The following is a 125-amino-acid chain: Fluoride-specific ion channel FluC (125 aa).

The next 4 helical transmembrane spans lie at 5-25 (LLVALGGALGSLLRYGLGALV), 29-49 (LGAGFPWSTLFVNALGSFLIG), 66-86 (LFLAVGVLGGFTTFSSLSYET), and 95-115 (VGKALLYAFGSLFLGLFLAFL). G74 and T77 together coordinate Na(+).

This sequence belongs to the fluoride channel Fluc/FEX (TC 1.A.43) family.

The protein localises to the cell inner membrane. The enzyme catalyses fluoride(in) = fluoride(out). With respect to regulation, na(+) is not transported, but it plays an essential structural role and its presence is essential for fluoride channel function. Fluoride-specific ion channel. Important for reducing fluoride concentration in the cell, thus reducing its toxicity. The polypeptide is Fluoride-specific ion channel FluC (Thermus thermophilus (strain ATCC 27634 / DSM 579 / HB8)).